The following is a 282-amino-acid chain: Nucleotide-binding protein Fnod_1159 (282 aa).

Position 9-16 (9-16 (GHSGAGKS)) interacts with ATP. 57–60 (DIRS) lines the GTP pocket.

It belongs to the RapZ-like family.

Displays ATPase and GTPase activities. This Fervidobacterium nodosum (strain ATCC 35602 / DSM 5306 / Rt17-B1) protein is Nucleotide-binding protein Fnod_1159.